A 438-amino-acid chain; its full sequence is Minor capsid protein p49 (438 aa).

Positions 145–167 are disordered; the sequence is NCLTQPSSLPSLKNPKNSSVPST.

Belongs to the asfivirus p49 structural protein family.

The protein resides in the virion. In terms of biological role, together with the penton and the other minor capsid proteins (M1249L, p17), forms a complicated network immediately below the outer capsid shell, stabilizing the whole capsid. Plays an essential role in the formation of infectious virus particles. Especially required for the formation of the capsid vertices. During virion assembly, associates with the membrane and probably mediates the docking of the penton complex to the inner membrane, where it recruits the capsomers to form the penton core. The chain is Minor capsid protein p49 from Ornithodoros (relapsing fever ticks).